The following is a 539-amino-acid chain: Netrin-G1 (539 aa).

The first 18 residues, 1-18 (MYLSRFLSIHALWVTVSS), serve as a signal peptide directing secretion. Cystine bridges form between Cys-33-Cys-50, Cys-72-Cys-92, and Cys-80-Cys-88. A Laminin N-terminal domain is found at 46–296 (DYTACQPEST…AISDIKVRGR (251 aa)). Residues 80–91 (CAMGNPYMCNNE) are NGL discriminant loop I. Residue Asn-133 is glycosylated (N-linked (GlcNAc...) asparagine). A disulfide bond links Cys-182 and Cys-206. Residues 208-214 (EEYSTGY) are NGL discriminant loop II. Residues 273–275 (EIF) are NGL discriminant loop III. Disulfide bonds link Cys-297–Cys-306, Cys-299–Cys-315, Cys-317–Cys-326, Cys-329–Cys-354, Cys-364–Cys-373, Cys-366–Cys-384, Cys-387–Cys-396, Cys-399–Cys-417, Cys-420–Cys-432, Cys-422–Cys-438, Cys-440–Cys-449, Cys-452–Cys-462, and Cys-488–Cys-497. Laminin EGF-like domains lie at 297-356 (CKCN…TCIP), 364-419 (CECF…VCIE), and 420-469 (CYCN…VCDN). Asn-320 is a glycosylation site (N-linked (GlcNAc...) asparagine). Asn-406 is a glycosylation site (N-linked (GlcNAc...) asparagine). Residue Asn-433 is glycosylated (N-linked (GlcNAc...) asparagine). Ser-510 carries GPI-anchor amidated serine lipidation. A propeptide spans 511-539 (ESGQGAPPRGSPALLLLTMLLGTAGPLVF) (removed in mature form).

N-glycosylated. Expression is restricted primarily to neurons of the CNS, particularly in the dorsal thalamus, olfactory bulb and inferior colliculus. Isoform 1A and isoform 1D are the major products in adult brain.

Its subcellular location is the cell membrane. Its function is as follows. Involved in controlling patterning and neuronal circuit formation at the laminar, cellular, subcellular and synaptic levels. Promotes neurite outgrowth of both axons and dendrites. In Mus musculus (Mouse), this protein is Netrin-G1 (Ntng1).